A 30-amino-acid chain; its full sequence is Cyclotide mden-I (30 aa).

Positions 1 to 30 form a cross-link, cyclopeptide (Gly-Asn); that stretch reads GIPCGESCVYIPCITTAIGCSCKNKVCYRN. Cystine bridges form between Cys-4–Cys-20, Cys-8–Cys-22, and Cys-13–Cys-27.

This sequence belongs to the cyclotide family. Bracelet subfamily. In terms of processing, this is a cyclic peptide.

In terms of biological role, probably participates in a plant defense mechanism. This chain is Cyclotide mden-I, found in Melicytus dentatus (Tree violet).